Consider the following 375-residue polypeptide: Homoserine O-succinyltransferase (375 aa).

The 311-residue stretch at 48–358 (NAVLVCHALS…DAGHDSFLLD (311 aa)) folds into the AB hydrolase-1 domain. Residue S154 is the Nucleophile of the active site. A substrate-binding site is contributed by R224. Residues D319 and H352 contribute to the active site. Residue D353 coordinates substrate.

Belongs to the AB hydrolase superfamily. MetX family. In terms of assembly, homodimer.

It localises to the cytoplasm. The enzyme catalyses L-homoserine + succinyl-CoA = O-succinyl-L-homoserine + CoA. It participates in amino-acid biosynthesis; L-methionine biosynthesis via de novo pathway; O-succinyl-L-homoserine from L-homoserine: step 1/1. In terms of biological role, transfers a succinyl group from succinyl-CoA to L-homoserine, forming succinyl-L-homoserine. This is Homoserine O-succinyltransferase from Aromatoleum aromaticum (strain DSM 19018 / LMG 30748 / EbN1) (Azoarcus sp. (strain EbN1)).